Reading from the N-terminus, the 261-residue chain is Adenosylcobinamide-GDP ribazoletransferase (261 aa).

A run of 5 helical transmembrane segments spans residues 31–51, 59–79, 125–145, 183–203, and 240–260; these read YAIC…FLTF, LGDI…SGGI, FGMV…FFVV, VIYL…LTVV, and LMAG…TGHW.

This sequence belongs to the CobS family. Requires Mg(2+) as cofactor.

Its subcellular location is the cell membrane. It carries out the reaction alpha-ribazole + adenosylcob(III)inamide-GDP = adenosylcob(III)alamin + GMP + H(+). The enzyme catalyses alpha-ribazole 5'-phosphate + adenosylcob(III)inamide-GDP = adenosylcob(III)alamin 5'-phosphate + GMP + H(+). The protein operates within cofactor biosynthesis; adenosylcobalamin biosynthesis; adenosylcobalamin from cob(II)yrinate a,c-diamide: step 7/7. In terms of biological role, joins adenosylcobinamide-GDP and alpha-ribazole to generate adenosylcobalamin (Ado-cobalamin). Also synthesizes adenosylcobalamin 5'-phosphate from adenosylcobinamide-GDP and alpha-ribazole 5'-phosphate. This chain is Adenosylcobinamide-GDP ribazoletransferase, found in Lachnoclostridium phytofermentans (strain ATCC 700394 / DSM 18823 / ISDg) (Clostridium phytofermentans).